The primary structure comprises 92 residues: MARSIWKGPFVDGYLIKKVQKLMESGKSEMIKTWSRRSTILPIFVGFTFSVHNGNKFIPVSVNEEMVGRKLGEFAPTRTFYGHGADKKVKRK.

This sequence belongs to the universal ribosomal protein uS19 family.

Protein S19 forms a complex with S13 that binds strongly to the 16S ribosomal RNA. The chain is Small ribosomal subunit protein uS19 from Rickettsia canadensis (strain McKiel).